The primary structure comprises 119 residues: C-X-C motif chemokine 17 (119 aa).

Residues Met-1 to Ser-22 form the signal peptide. The interval Cys-75–Ser-100 is disordered. Cystine bridges form between Cys-75–Cys-103 and Cys-77–Cys-110. Over residues Gly-82–Arg-98 the composition is skewed to basic residues.

The protein belongs to the intercrine alpha (chemokine CxC) family. In terms of processing, likely to undergo an endoproteolytic process to form a four-cysteine-containing mature peptide with a canonical CXC chemokine scaffold after secretion. In terms of tissue distribution, detected in lung, trachea, lung, tongue thyroid, submaxillary gland, epididymis, and uterus tissues and at a lower level in ovary, prostate and in intestinal tissues.

It localises to the secreted. Functionally, chemokine that acts as a chemoattractant for monocytes, macrophages and dendritic cells. Plays a role in angiogenesis and possibly in the development of tumors. Acts as an anti-inflammatory in the stomach. May play a role in the innate defense against infections. Activates the C-X-C chemokine receptor GPR35 to induce a rapid and transient rise in the level of intracellular calcium ions. This Mus musculus (Mouse) protein is C-X-C motif chemokine 17 (Cxcl17).